Consider the following 168-residue polypeptide: Ribosome maturation factor RimM (168 aa).

The PRC barrel domain occupies 95–168; sequence KEGYYWSDLI…QIMVDWELDY (74 aa).

This sequence belongs to the RimM family. Binds ribosomal protein uS19.

The protein localises to the cytoplasm. Its function is as follows. An accessory protein needed during the final step in the assembly of 30S ribosomal subunit, possibly for assembly of the head region. Essential for efficient processing of 16S rRNA. May be needed both before and after RbfA during the maturation of 16S rRNA. It has affinity for free ribosomal 30S subunits but not for 70S ribosomes. This Nitrosomonas eutropha (strain DSM 101675 / C91 / Nm57) protein is Ribosome maturation factor RimM.